Consider the following 77-residue polypeptide: Liver-expressed antimicrobial peptide 2 (77 aa).

An N-terminal signal peptide occupies residues 1 to 22 (MWHLKLFAVLMICLLLLAQVDG). A propeptide spanning residues 23–37 (SPIPQQSSAKRRPRR) is cleaved from the precursor. 2 cysteine pairs are disulfide-bonded: C54–C65 and C60–C70.

It belongs to the LEAP2 family.

Its subcellular location is the secreted. Its function is as follows. Has an antimicrobial activity. This chain is Liver-expressed antimicrobial peptide 2 (LEAP2), found in Bos taurus (Bovine).